We begin with the raw amino-acid sequence, 376 residues long: Glutamate 5-kinase (376 aa).

Lys16 contacts ATP. Ser56, Asp143, and Asn155 together coordinate substrate. An ATP-binding site is contributed by 175–176 (TD). Residues 283–361 (RGALSLDEGA…RDIETTLGYV (79 aa)) form the PUA domain.

Belongs to the glutamate 5-kinase family.

Its subcellular location is the cytoplasm. The catalysed reaction is L-glutamate + ATP = L-glutamyl 5-phosphate + ADP. The protein operates within amino-acid biosynthesis; L-proline biosynthesis; L-glutamate 5-semialdehyde from L-glutamate: step 1/2. Functionally, catalyzes the transfer of a phosphate group to glutamate to form L-glutamate 5-phosphate. The chain is Glutamate 5-kinase from Halorhodospira halophila (strain DSM 244 / SL1) (Ectothiorhodospira halophila (strain DSM 244 / SL1)).